The chain runs to 303 residues: Recombination-associated protein RdgC (303 aa).

The protein belongs to the RdgC family.

The protein resides in the cytoplasm. It is found in the nucleoid. Its function is as follows. May be involved in recombination. This Shewanella sediminis (strain HAW-EB3) protein is Recombination-associated protein RdgC.